The following is a 300-amino-acid chain: Ribosomal RNA small subunit methyltransferase H (300 aa).

S-adenosyl-L-methionine is bound by residues 46 to 48 (GGH), Asp65, Phe92, Asp107, and Gln114.

This sequence belongs to the methyltransferase superfamily. RsmH family.

The protein resides in the cytoplasm. It catalyses the reaction cytidine(1402) in 16S rRNA + S-adenosyl-L-methionine = N(4)-methylcytidine(1402) in 16S rRNA + S-adenosyl-L-homocysteine + H(+). Functionally, specifically methylates the N4 position of cytidine in position 1402 (C1402) of 16S rRNA. The sequence is that of Ribosomal RNA small subunit methyltransferase H from Prochlorococcus marinus (strain MIT 9215).